We begin with the raw amino-acid sequence, 211 residues long: Hypoxanthine-guanine phosphoribosyltransferase (211 aa).

Residues Met-1–Tyr-20 form a disordered region. GMP is bound by residues Lys-66, Glu-125–Thr-133, Lys-157, and Asp-185. The active-site Proton acceptor is the Asp-129. Asp-185 serves as a coordination point for Mg(2+).

It belongs to the purine/pyrimidine phosphoribosyltransferase family. Mg(2+) serves as cofactor.

The protein localises to the cytoplasm. The enzyme catalyses IMP + diphosphate = hypoxanthine + 5-phospho-alpha-D-ribose 1-diphosphate. The catalysed reaction is GMP + diphosphate = guanine + 5-phospho-alpha-D-ribose 1-diphosphate. Its pathway is purine metabolism; IMP biosynthesis via salvage pathway; IMP from hypoxanthine: step 1/1. Converts guanine to guanosine monophosphate, and hypoxanthine to inosine monophosphate. Transfers the 5-phosphoribosyl group from 5-phosphoribosylpyrophosphate onto the purine. Plays a central role in the generation of purine nucleotides through the purine salvage pathway. This is Hypoxanthine-guanine phosphoribosyltransferase from Leishmania donovani.